The primary structure comprises 215 residues: Cytochrome c biogenesis ATP-binding export protein CcmA (215 aa).

The ABC transporter domain maps to 3–215 (LEAENLAGER…MAAFSVEDIA (213 aa)). Residue 35–42 (GPNGSGKS) coordinates ATP.

This sequence belongs to the ABC transporter superfamily. CcmA exporter (TC 3.A.1.107) family. In terms of assembly, the complex is composed of two ATP-binding proteins (CcmA) and two transmembrane proteins (CcmB).

Its subcellular location is the cell inner membrane. The catalysed reaction is heme b(in) + ATP + H2O = heme b(out) + ADP + phosphate + H(+). Functionally, part of the ABC transporter complex CcmAB involved in the biogenesis of c-type cytochromes; once thought to export heme, this seems not to be the case, but its exact role is uncertain. Responsible for energy coupling to the transport system. This chain is Cytochrome c biogenesis ATP-binding export protein CcmA, found in Brucella abortus (strain 2308).